Consider the following 82-residue polypeptide: Small ribosomal subunit protein bS16 (82 aa).

The protein belongs to the bacterial ribosomal protein bS16 family.

This is Small ribosomal subunit protein bS16 from Serratia proteamaculans (strain 568).